The following is a 204-amino-acid chain: Fruiting body protein SC7 (204 aa).

An N-terminal signal peptide occupies residues 1 to 16 (MKLTVILLTAVLAASA). An SCP domain is found at 62–185 (LKAHNNERAQ…KTLWYYVCNY (124 aa)). N-linked (GlcNAc...) asparagine glycosylation is found at Asn80, Asn118, and Asn134.

The protein belongs to the CRISP family.

The protein resides in the secreted. In Schizophyllum commune (Split gill fungus), this protein is Fruiting body protein SC7 (SC7).